A 409-amino-acid chain; its full sequence is Astacin-like metalloendopeptidase (409 aa).

The N-terminal stretch at 1–19 (MDLKMLLIFIAFLLPSVLG) is a signal peptide. A compositionally biased stretch (low complexity) spans 30-39 (TATTESTQVT). The segment at 30–54 (TATTESTQVTTEEDIYDSPSPAETD) is disordered. Residues 87-285 (SAINCRNCYW…AKINRLYNCS (199 aa)) enclose the Peptidase M12A domain. 5 cysteine pairs are disulfide-bonded: C91–C94, C134–C284, C155–C175, C287–C313, and C339–C362. H183 contributes to the Zn(2+) binding site. Residue E184 is part of the active site. Zn(2+) is bound by residues H187 and H193. The region spanning 287-399 (CSTIIDAAFG…SGFQATFTSA (113 aa)) is the CUB domain.

Zn(2+) is required as a cofactor. Expressed in ovary and gonads.

It is found in the cytoplasm. The protein localises to the cell membrane. Its subcellular location is the cytoplasmic vesicle. It localises to the secretory vesicle. The protein resides in the cortical granule. Probable oocyte-specific oolemmal receptor involved in sperm and egg adhesion and fertilization. May act as a protease. The polypeptide is Astacin-like metalloendopeptidase (ASTL) (Gallus gallus (Chicken)).